The primary structure comprises 230 residues: Orotidine 5'-phosphate decarboxylase (230 aa).

Substrate contacts are provided by residues aspartate 9, lysine 31, 58–67, threonine 120, arginine 180, glutamine 188, glycine 208, and arginine 209; that span reads DLKFFDIPNT. Catalysis depends on lysine 60, which acts as the Proton donor.

It belongs to the OMP decarboxylase family. Type 1 subfamily. Homodimer.

The catalysed reaction is orotidine 5'-phosphate + H(+) = UMP + CO2. Its pathway is pyrimidine metabolism; UMP biosynthesis via de novo pathway; UMP from orotate: step 2/2. Functionally, catalyzes the decarboxylation of orotidine 5'-monophosphate (OMP) to uridine 5'-monophosphate (UMP). In Maridesulfovibrio salexigens (strain ATCC 14822 / DSM 2638 / NCIMB 8403 / VKM B-1763) (Desulfovibrio salexigens), this protein is Orotidine 5'-phosphate decarboxylase.